Consider the following 356-residue polypeptide: GDSL esterase/lipase At2g36325 (356 aa).

Positions 1–26 (MNITKLTPWFLFSCLILLSDYIKVNS) are cleaved as a signal peptide. Asparagine 25 is a glycosylation site (N-linked (GlcNAc...) asparagine). Serine 54 (nucleophile) is an active-site residue. N-linked (GlcNAc...) asparagine glycosylation is found at asparagine 165, asparagine 185, and asparagine 240. Catalysis depends on residues aspartate 334 and histidine 337.

This sequence belongs to the 'GDSL' lipolytic enzyme family.

Its subcellular location is the secreted. The sequence is that of GDSL esterase/lipase At2g36325 from Arabidopsis thaliana (Mouse-ear cress).